The chain runs to 395 residues: F-box protein At5g46170 (395 aa).

The F-box domain occupies 24–72 (IDHFDHLPDSILLLVFNKIGDVKALGRCCVVSRRFHSLVPQVDNVVVRV). Residues 122 to 158 (TKRSSSSCGGSGSSSSSLSISGDDDGGEIEQGGVTHH) are disordered. The span at 125–142 (SSSSCGGSGSSSSSLSIS) shows a compositional bias: low complexity.

The polypeptide is F-box protein At5g46170 (Arabidopsis thaliana (Mouse-ear cress)).